A 53-amino-acid polypeptide reads, in one-letter code: VFGGDECNINEHRSLVVLFDSDGFLCAGTLINKEWVLTAAHCDSENFQMQLGV.

A disulfide bridge links Cys-26 with Cys-42. The Charge relay system role is filled by His-41.

Monomer. In terms of processing, N-glycosylated. Expressed by the venom gland.

It localises to the secreted. With respect to regulation, inhibited by the small molecule serine protease inhibitors phenylmethylsulfonyl fluoride (PMSF) and benzamidine. Functionally, snake venom serine protease that has fibrinogenolytic activity. Hydrolyzes the alpha-chain of fibrinogen (FGA), without affecting the beta- and the gamma-chains. Also displays hydrolytic activity towards S-2302 (plasma kallikrein substrate) and S-2251 (substrate for plasmin), but has no hydrolytic activity with S-2238 (thrombin substrate) or S-2222 (factor Xa). The protein is Snake venom serine protease LmrSP-4 of Lachesis muta rhombeata (Bushmaster).